A 729-amino-acid chain; its full sequence is Fatty acid oxidation complex subunit alpha (729 aa).

The segment at 1-189 is enoyl-CoA hydratase/isomerase; it reads MLYKGDTLYL…KVGLVDAVVK (189 aa). Asp-296 is a substrate binding site. A 3-hydroxyacyl-CoA dehydrogenase region spans residues 311–729; it reads ETPKQAAVLG…AQPVGELQTA (419 aa). NAD(+) is bound by residues Met-324, Asp-343, 400-402, Lys-407, and Ser-429; that span reads VVE. His-450 serves as the catalytic For 3-hydroxyacyl-CoA dehydrogenase activity. Position 453 (Asn-453) interacts with NAD(+). Residues Asn-500 and Tyr-660 each coordinate substrate. Residues 708-729 are disordered; that stretch reads SHNAPYYPQVEPAQPVGELQTA.

It in the N-terminal section; belongs to the enoyl-CoA hydratase/isomerase family. This sequence in the C-terminal section; belongs to the 3-hydroxyacyl-CoA dehydrogenase family. As to quaternary structure, heterotetramer of two alpha chains (FadB) and two beta chains (FadA).

The catalysed reaction is a (3S)-3-hydroxyacyl-CoA + NAD(+) = a 3-oxoacyl-CoA + NADH + H(+). It catalyses the reaction a (3S)-3-hydroxyacyl-CoA = a (2E)-enoyl-CoA + H2O. The enzyme catalyses a 4-saturated-(3S)-3-hydroxyacyl-CoA = a (3E)-enoyl-CoA + H2O. It carries out the reaction (3S)-3-hydroxybutanoyl-CoA = (3R)-3-hydroxybutanoyl-CoA. The catalysed reaction is a (3Z)-enoyl-CoA = a 4-saturated (2E)-enoyl-CoA. It catalyses the reaction a (3E)-enoyl-CoA = a 4-saturated (2E)-enoyl-CoA. Its pathway is lipid metabolism; fatty acid beta-oxidation. In terms of biological role, involved in the aerobic and anaerobic degradation of long-chain fatty acids via beta-oxidation cycle. Catalyzes the formation of 3-oxoacyl-CoA from enoyl-CoA via L-3-hydroxyacyl-CoA. It can also use D-3-hydroxyacyl-CoA and cis-3-enoyl-CoA as substrate. The protein is Fatty acid oxidation complex subunit alpha of Cronobacter sakazakii (strain ATCC BAA-894) (Enterobacter sakazakii).